The following is a 926-amino-acid chain: MAKPVAASFLTQANALFKKNLTYQKRNIWSNVRLIVIPLYLCVVLVCIQAVFDSLVNNSVDNQCGCRCADDDKNGDGKCEIKSCGLQYSSQNQAVFCAFPNPPPLLPLLHIPPSVNRDSCQRTGSCPVTILVTGNNQSLGTTLSENLLSTSFTVNSSSDLFLRNLAYNVLSTTSETDYTNYRDPGIYSDLPIFNIQPQCTPATILSLSFRQPPLEFHKEVRCVQGLNLWRNNSLEVNDEIFKGFRKENHEEIINEVAAAYDLLNTDRNKFNVTIWYYTTYKGDLQDWRVKYVRVPRSVNMVSNAYLQFLRGPGTKILFDFVKEMPKQETRLRMDMASLIGPIFFTWVILLLFPVILTSLVYEKQQRLRIIMKMHGLGDAPYWMISYAYFLAISTLYIVCLMIFGSAIGLKFFRFNDYTIQFMFYFLYINLQISIAFLVSSAFSKAVTASVVAYIYVFGSGLLGAFLFQFLIESLSFPRRWIFVMELYPGFSLYRGLYEFSQYAFQRNLNGRDGMKWKDFRGSAMDEVFTIIIVEWVVALVATYYIDRVSSSSKDTFAFLKNPFKLSPTPQMLSFQKERSDVSVEMEKLDVIQEKETVKQLIFERSKNHGIVCDNLKKVYQGRDGNPPKLAVCGLSLAVPSGECFGMLGPNGAGKTSFINMMTGLVKPSSGSAFVQGLDICKDMDKVYISMGVCPQHDLLWETLTGKEHLLFYGRLKNLKGHDLNQAVEESLKSVNLFHGGVADIPAGKYSGGMKRRLSVAISLIGSPKVVYMDEPSTGLDPASRINLWTVIKRAKKHAAIILTTHSMEEAEFLCDRLGIFVDGRLQCIGNPKELKGRYGGSYVLTITTSPEHEKDVETLVQEVSSNARKIYHIAGTQKFEFPKEEVRISEVFQAVENAKRNFTVFAWGFADTTLEDVFIKVAKTGL.

Transmembrane regions (helical) follow at residues 34–54, 336–356, 389–409, 418–438, 451–471, and 525–545; these read LIVIPLYLCVVLVCIQAVFDS, ASLIGPIFFTWVILLLFPVIL, FLAISTLYIVCLMIFGSAIGL, TIQFMFYFLYINLQISIAFLV, VAYIYVFGSGLLGAFLFQFLI, and DEVFTIIIVEWVVALVATYYI. The region spanning 610–847 is the ABC transporter domain; the sequence is IVCDNLKKVY…YGGSYVLTIT (238 aa). 648-655 provides a ligand contact to ATP; that stretch reads GPNGAGKT.

Belongs to the ABC transporter superfamily. ABCA family. CPR flippase (TC 3.A.1.211) subfamily.

It localises to the membrane. This chain is ABC transporter A family member 6 (ABCA6), found in Arabidopsis thaliana (Mouse-ear cress).